A 145-amino-acid polypeptide reads, in one-letter code: D-aminoacyl-tRNA deacylase (145 aa).

The Gly-cisPro motif, important for rejection of L-amino acids signature appears at 137-138 (GP).

Belongs to the DTD family. In terms of assembly, homodimer.

The protein localises to the cytoplasm. It catalyses the reaction glycyl-tRNA(Ala) + H2O = tRNA(Ala) + glycine + H(+). The enzyme catalyses a D-aminoacyl-tRNA + H2O = a tRNA + a D-alpha-amino acid + H(+). An aminoacyl-tRNA editing enzyme that deacylates mischarged D-aminoacyl-tRNAs. Also deacylates mischarged glycyl-tRNA(Ala), protecting cells against glycine mischarging by AlaRS. Acts via tRNA-based rather than protein-based catalysis; rejects L-amino acids rather than detecting D-amino acids in the active site. By recycling D-aminoacyl-tRNA to D-amino acids and free tRNA molecules, this enzyme counteracts the toxicity associated with the formation of D-aminoacyl-tRNA entities in vivo and helps enforce protein L-homochirality. In Erwinia tasmaniensis (strain DSM 17950 / CFBP 7177 / CIP 109463 / NCPPB 4357 / Et1/99), this protein is D-aminoacyl-tRNA deacylase.